A 514-amino-acid chain; its full sequence is Vacuolar aminopeptidase 1 (514 aa).

A propeptide spans 1-45 (MEEQREILEQLKKTLQMLTVEPSKNNQIANEEKEKKENENSWCIL) (required for vacuolar localization. Mediates aggregation and vesicle formation in Cvt pathway). N107 and N110 each carry an N-linked (GlcNAc...) asparagine glycan. Zn(2+) is bound at residue H132. H210 is a substrate binding site. D303, E339, and E340 together coordinate Zn(2+). Residue E339 participates in substrate binding. Position 356 is a phosphoserine (S356). D385 lines the Zn(2+) pocket. Positions 385 and 388 each coordinate substrate. Residue N448 is glycosylated (N-linked (GlcNAc...) asparagine). H479 serves as a coordination point for Zn(2+).

The protein belongs to the peptidase M18 family. As to quaternary structure, homododecamer. The precursor form of aminopeptidase 1 (prApe1) assembles into dodecamers and further aggregates into higher multimers (the Ape1 complex) in the cytoplasm. The Ape1 complex is disaggregated in the vacuolar lumen, but mature aminopeptidase 1 (mApe1) retains its dodecameric form. Dodecamer assembly in the cytoplasm is essential for formation of an enzymatically active complex. If cytoplasmic homododecamerization of prApe1 is disturbed in mutants, homododecamers of mApe1 will form in the vacuole, but they are enzymatically inactive. Interacts with ATG19. Zn(2+) serves as cofactor. In terms of processing, synthesized in a precursor form (prApe1) that has an amino-terminal propeptide. The N-terminal extension of the 61 kDa precursor is proteolytically processed in two sequential steps. The first step involves proteinase A (PrA/PEP4) and produces a 55 kDa unstable intermediate (iAPI). The second step involves proteinase B (PrB/PRB1) and converts iAPI into the 50 kDa stable, mature enzyme (mApe1).

Its subcellular location is the vacuole. The catalysed reaction is Release of an N-terminal amino acid, preferably a neutral or hydrophobic one, from a polypeptide. Aminoacyl-arylamides are poor substrates.. With respect to regulation, strongly and specifically activated by Cl(-) and Br(-), which act as positive allosteric effectors. Inactivated by metal-chelating agents. In terms of biological role, resident vacuolar enzyme that catalyzes the removal of amino acids from the N-terminus of peptides and proteins. Also acts as the major cargo protein of the cytoplasm-to-vacuole targeting (Cvt) pathway. The precursor form of aminopeptidase 1 (prApe1) assembles into dodecamers and the propeptide mediates the aggregation of dodecamers into higher multimers. The multimers are then recognized via the propeptide by their receptor ATG19, and ATG19 further interacts with ATG11, which tethers the APE1-ATG19 complex to the pre-autophagosomal structure (PAS). The cargo-receptor complex (also Cvt complex) is selectively enwrapped by a double-membrane structure termed the Cvt vesicle under vegetative growth conditions and by a similar but larger double-membrane structure termed the autophagosome under nitrogen starvation conditions. The Cvt vesicle or the autophagosome fuses with the vacuolar membrane and release its content in the vacuolar lumen. In the vacuole, prApe1 is processed into mature aminopeptidase 1 (mApe1). The chain is Vacuolar aminopeptidase 1 from Saccharomyces cerevisiae (strain ATCC 204508 / S288c) (Baker's yeast).